Reading from the N-terminus, the 212-residue chain is HTH-type transcriptional repressor NicS (212 aa).

In terms of domain architecture, HTH tetR-type spans 14 to 74 (DRTRDNILKA…SVLEHIYASF (61 aa)). A DNA-binding region (H-T-H motif) is located at residues 37–56 (RIEQISTLAKSNDRMIYYYF).

It participates in cofactor degradation; nicotinate degradation [regulation]. Its function is as follows. Transcriptional repressor for the nicAB operon, encoding the upper aerobic nicotinate degradation pathway. Acts under non-induced conditions: repression of the nicAB operon becomes alleviated in presence of either nicotinate or 6-hydroxynicotinate (6HNA). The sequence is that of HTH-type transcriptional repressor NicS (nicS) from Pseudomonas putida (strain ATCC 47054 / DSM 6125 / CFBP 8728 / NCIMB 11950 / KT2440).